Consider the following 434-residue polypeptide: Zinc finger CCCH domain-containing protein 10 (434 aa).

Positions 1–37 are disordered; the sequence is MPDRDSYANGTGSSGGGPGGGGSEEASGAGVGSGGAS. Over residues 12 to 35 the composition is skewed to gly residues; the sequence is GSSGGGPGGGGSEEASGAGVGSGG. C3H1-type zinc fingers lie at residues 36-63, 73-99, and 134-161; these read ASSD…HPDM, KNEF…HGSK, and KEEV…HLQR. 2 positions are modified to omega-N-methylarginine: arginine 185 and arginine 186. The span at 196-207 shows a compositional bias: basic and acidic residues; the sequence is PDRGFEDHEPGP. A disordered region spans residues 196 to 217; the sequence is PDRGFEDHEPGPKRRRGGCCPP. A coiled-coil region spans residues 234–280; that stretch reads GVECRLLEEENAMLRKRVEELKKQVSNLLATNEVLLEQNAQFRNQAK. Residues 314 to 330 are compositionally biased toward polar residues; it reads TTLSSQALQPRPVSQQE. A disordered region spans residues 314–362; that stretch reads TTLSSQALQPRPVSQQELVAPAGAPAAPPTNAAPPAAPPPPPPHLTPEI. Residues 339–358 are compositionally biased toward pro residues; the sequence is AAPPTNAAPPAAPPPPPPHL.

The protein resides in the nucleus. In terms of biological role, specific regulator of miRNA biogenesis. Binds, via the C3H1-type zinc finger domains, to the binding motif 5'-GCAGCGC-3' on microRNA pri-MIR143 and negatively regulates the processing to mature microRNA. This chain is Zinc finger CCCH domain-containing protein 10 (ZC3H10), found in Homo sapiens (Human).